A 228-amino-acid polypeptide reads, in one-letter code: Ribonuclease 3 (228 aa).

One can recognise an RNase III domain in the interval 7–132 (LSAFMDRLGH…VIAAVYLDAG (126 aa)). A Mg(2+)-binding site is contributed by glutamate 45. The active site involves aspartate 49. Mg(2+) is bound by residues aspartate 118 and glutamate 121. Glutamate 121 is a catalytic residue. Residues 157-226 (DPKTALQEWA…AKALLERLER (70 aa)) form the DRBM domain.

The protein belongs to the ribonuclease III family. In terms of assembly, homodimer. Requires Mg(2+) as cofactor.

It is found in the cytoplasm. It carries out the reaction Endonucleolytic cleavage to 5'-phosphomonoester.. Functionally, digests double-stranded RNA. Involved in the processing of ribosomal RNA precursors and of some mRNAs. Complements an E.coli disruption mutant, but the E.coli enzyme does not cleave R.capsulatus rRNA precursor, showing substrate recognition is different. Probably also processes some mRNAs, and tRNAs when they are encoded in the rRNA operon. Probably processes pre-crRNA and tracrRNA of type II CRISPR loci if present in the organism. The chain is Ribonuclease 3 (rnc) from Rhodobacter capsulatus (Rhodopseudomonas capsulata).